A 136-amino-acid chain; its full sequence is MTSVGVPIKILHEAEGHMVTLETVTGEVYRGKLSEAEDNMNCQLAETVVTFRDGRSHQLDNVFIRGNKIRFMILPDMLKNAPMFKNIGRAQKGAIGMGLGGLDQRGRGRGTAFRRPMGRGGPRGMSRPGGAPTFRG.

The Sm domain occupies 6-78 (VPIKILHEAE…IRFMILPDML (73 aa)). Residues 98–136 (GLGGLDQRGRGRGTAFRRPMGRGGPRGMSRPGGAPTFRG) are disordered.

It belongs to the snRNP core protein family.

It is found in the nucleus. It localises to the cytoplasm. Its subcellular location is the cytosol. Functionally, plays a role in pre-mRNA splicing as a core component of the spliceosomal U1, U2, U4 and U5 small nuclear ribonucleoproteins (snRNPs), the building blocks of the spliceosome. The chain is Small nuclear ribonucleoprotein Sm D3 (snr-1) from Caenorhabditis elegans.